The primary structure comprises 279 residues: Large ribosomal subunit protein uL2 (279 aa).

2 disordered regions span residues 29–53 (PEKS…TTRH) and 224–279 (VAMN…KKRK). Residues 253–268 (KEGRTRHPNKESDKLI) show a composition bias toward basic and acidic residues. Residues 269 to 279 (VRRRNAGKKRK) are compositionally biased toward basic residues.

It belongs to the universal ribosomal protein uL2 family. In terms of assembly, part of the 50S ribosomal subunit. Forms a bridge to the 30S subunit in the 70S ribosome.

Its function is as follows. One of the primary rRNA binding proteins. Required for association of the 30S and 50S subunits to form the 70S ribosome, for tRNA binding and peptide bond formation. It has been suggested to have peptidyltransferase activity; this is somewhat controversial. Makes several contacts with the 16S rRNA in the 70S ribosome. The sequence is that of Large ribosomal subunit protein uL2 from Leifsonia xyli subsp. xyli (strain CTCB07).